We begin with the raw amino-acid sequence, 607 residues long: Elongation factor 4 (607 aa).

The 183-residue stretch at 11–193 (KSIRNFSIIA…QIVAKVPAPT (183 aa)) folds into the tr-type G domain. Residues 23–28 (DHGKST) and 140–143 (NKID) each bind GTP.

The protein belongs to the TRAFAC class translation factor GTPase superfamily. Classic translation factor GTPase family. LepA subfamily.

It is found in the cell membrane. The catalysed reaction is GTP + H2O = GDP + phosphate + H(+). Its function is as follows. Required for accurate and efficient protein synthesis under certain stress conditions. May act as a fidelity factor of the translation reaction, by catalyzing a one-codon backward translocation of tRNAs on improperly translocated ribosomes. Back-translocation proceeds from a post-translocation (POST) complex to a pre-translocation (PRE) complex, thus giving elongation factor G a second chance to translocate the tRNAs correctly. Binds to ribosomes in a GTP-dependent manner. The chain is Elongation factor 4 from Exiguobacterium sibiricum (strain DSM 17290 / CCUG 55495 / CIP 109462 / JCM 13490 / 255-15).